We begin with the raw amino-acid sequence, 81 residues long: Cytochrome b559 subunit alpha (81 aa).

A helical membrane pass occupies residues 22-36; the sequence is VIHSITIPSLFIAGW. His24 lines the heme pocket.

The protein belongs to the PsbE/PsbF family. In terms of assembly, heterodimer of an alpha subunit and a beta subunit. PSII is composed of 1 copy each of membrane proteins PsbA, PsbB, PsbC, PsbD, PsbE, PsbF, PsbH, PsbI, PsbJ, PsbK, PsbL, PsbM, PsbT, PsbX, PsbY, PsbZ, Psb30/Ycf12, at least 3 peripheral proteins of the oxygen-evolving complex and a large number of cofactors. It forms dimeric complexes. Heme b is required as a cofactor.

The protein localises to the plastid. It localises to the chloroplast thylakoid membrane. Its function is as follows. This b-type cytochrome is tightly associated with the reaction center of photosystem II (PSII). PSII is a light-driven water:plastoquinone oxidoreductase that uses light energy to abstract electrons from H(2)O, generating O(2) and a proton gradient subsequently used for ATP formation. It consists of a core antenna complex that captures photons, and an electron transfer chain that converts photonic excitation into a charge separation. The sequence is that of Cytochrome b559 subunit alpha from Cyanidioschyzon merolae (strain NIES-3377 / 10D) (Unicellular red alga).